The primary structure comprises 451 residues: Probable NADH dehydrogenase (451 aa).

41 to 71 (KLIILGCGWGSYSFLKNLNSIKYDITVISPR) contacts FAD. Residue 199-236 (LSFVIVGGGATGIEFTSELNDFFSEDLSRLFPFVPVNE) participates in NAD(+) binding.

It belongs to the NADH dehydrogenase family. FAD serves as cofactor.

It carries out the reaction a ubiquinone + NADH + 5 H(+)(in) = a ubiquinol + NAD(+) + 4 H(+)(out). In Dictyostelium discoideum (Social amoeba), this protein is Probable NADH dehydrogenase.